A 232-amino-acid chain; its full sequence is Charged multivesicular body protein 4c (232 aa).

2 disordered regions span residues Met-1–Gln-23 and Glu-172–Thr-232. The intramolecular interaction with C-terminus stretch occupies residues Met-1–Val-153. Low complexity predominate over residues Ser-11–Gln-23. Coiled coils occupy residues Ser-21–Glu-50 and Leu-125–Ser-182. The interval Gln-154–Thr-232 is intramolecular interaction with N-terminus. Position 210 is a phosphoserine; by AURKB (Ser-210).

Belongs to the SNF7 family. As to quaternary structure, probable core component of the endosomal sorting required for transport complex III (ESCRT-III). ESCRT-III components are thought to multimerize to form a flat lattice on the perimeter membrane of the endosome. Several assembly forms of ESCRT-III may exist that interact and act sequentially. Self-associates. Interacts with CHMP2A. Interacts with CHMP4A. Interacts with CHMP4B. Interacts with CHMP6. Interacts with VPS4A. Interacts with PDCD6IP; the interaction is direct. Post-translationally, phosphorylated at Ser-210 by AURKB during cytokinesis: together with ZFYVE19/ANCHR, phosphorylated CHMP4C retains abscission-competent VPS4 (VPS4A and/or VPS4B) at the midbody ring until abscission checkpoint signaling is terminated at late cytokinesis.

It is found in the cytoplasm. The protein resides in the cytosol. The protein localises to the late endosome membrane. Its subcellular location is the midbody. It localises to the midbody ring. Its function is as follows. Probable core component of the endosomal sorting required for transport complex III (ESCRT-III) which is involved in multivesicular bodies (MVBs) formation and sorting of endosomal cargo proteins into MVBs. MVBs contain intraluminal vesicles (ILVs) that are generated by invagination and scission from the limiting membrane of the endosome and mostly are delivered to lysosomes enabling degradation of membrane proteins, such as stimulated growth factor receptors, lysosomal enzymes and lipids. The MVB pathway appears to require the sequential function of ESCRT-O, -I,-II and -III complexes. ESCRT-III proteins mostly dissociate from the invaginating membrane before the ILV is released. The ESCRT machinery also functions in topologically equivalent membrane fission events, such as the terminal stages of cytokinesis. Key component of the cytokinesis checkpoint, a process required to delay abscission to prevent both premature resolution of intercellular chromosome bridges and accumulation of DNA damage: upon phosphorylation by AURKB, together with ZFYVE19/ANCHR, retains abscission-competent VPS4 (VPS4A and/or VPS4B) at the midbody ring until abscission checkpoint signaling is terminated at late cytokinesis. Deactivation of AURKB results in dephosphorylation of CHMP4C followed by its dissociation from ANCHR and VPS4 and subsequent abscission. ESCRT-III proteins are believed to mediate the necessary vesicle extrusion and/or membrane fission activities, possibly in conjunction with the AAA ATPase VPS4. CHMP4A/B/C are required for the exosomal release of SDCBP, CD63 and syndecan. This Rattus norvegicus (Rat) protein is Charged multivesicular body protein 4c (Chmp4c).